A 352-amino-acid chain; its full sequence is Heat-inducible transcription repressor HrcA (352 aa).

Belongs to the HrcA family.

In terms of biological role, negative regulator of class I heat shock genes (grpE-dnaK-dnaJ and groELS operons). Prevents heat-shock induction of these operons. This is Heat-inducible transcription repressor HrcA from Thermosynechococcus vestitus (strain NIES-2133 / IAM M-273 / BP-1).